We begin with the raw amino-acid sequence, 117 residues long: Large ribosomal subunit protein bL20c (117 aa).

The protein belongs to the bacterial ribosomal protein bL20 family.

Its subcellular location is the plastid. The protein resides in the chloroplast. In terms of biological role, binds directly to 23S ribosomal RNA and is necessary for the in vitro assembly process of the 50S ribosomal subunit. It is not involved in the protein synthesizing functions of that subunit. In Ceratophyllum demersum (Rigid hornwort), this protein is Large ribosomal subunit protein bL20c.